A 307-amino-acid polypeptide reads, in one-letter code: Elongation factor Ts (307 aa).

Residues 79-82 form an involved in Mg(2+) ion dislocation from EF-Tu region; it reads TDFV.

The protein belongs to the EF-Ts family.

The protein resides in the cytoplasm. Its function is as follows. Associates with the EF-Tu.GDP complex and induces the exchange of GDP to GTP. It remains bound to the aminoacyl-tRNA.EF-Tu.GTP complex up to the GTP hydrolysis stage on the ribosome. The protein is Elongation factor Ts of Bartonella henselae (strain ATCC 49882 / DSM 28221 / CCUG 30454 / Houston 1) (Rochalimaea henselae).